We begin with the raw amino-acid sequence, 354 residues long: Protein-arginine kinase (354 aa).

The region spanning Ile24–Ala254 is the Phosphagen kinase C-terminal domain. ATP contacts are provided by residues Ser27–Arg31, His92, Arg125, Arg176–Met180, and Arg207–Glu212. Residues Arg337–Ala342 carry the RDXXRA motif of the pArg binding pocket involved in allosteric regulation motif.

The protein belongs to the ATP:guanido phosphotransferase family.

The enzyme catalyses L-arginyl-[protein] + ATP = N(omega)-phospho-L-arginyl-[protein] + ADP + H(+). Its activity is regulated as follows. Appears to be allosterically activated by the binding of pArg-containing polypeptides to the pArg-binding pocket localized in the C-terminal domain of McsB. In terms of biological role, catalyzes the specific phosphorylation of arginine residues in a large number of proteins. Is part of the bacterial stress response system. Protein arginine phosphorylation has a physiologically important role and is involved in the regulation of many critical cellular processes, such as protein homeostasis, motility, competence, and stringent and stress responses, by regulating gene expression and protein activity. This Bacillus cereus (strain AH187) protein is Protein-arginine kinase.